The following is an 89-amino-acid chain: Small ribosomal subunit protein uS15 (89 aa).

Belongs to the universal ribosomal protein uS15 family. As to quaternary structure, part of the 30S ribosomal subunit. Forms a bridge to the 50S subunit in the 70S ribosome, contacting the 23S rRNA.

Its function is as follows. One of the primary rRNA binding proteins, it binds directly to 16S rRNA where it helps nucleate assembly of the platform of the 30S subunit by binding and bridging several RNA helices of the 16S rRNA. In terms of biological role, forms an intersubunit bridge (bridge B4) with the 23S rRNA of the 50S subunit in the ribosome. This Sodalis glossinidius (strain morsitans) protein is Small ribosomal subunit protein uS15.